The sequence spans 386 residues: Lipid-A-disaccharide synthase (386 aa).

The protein belongs to the LpxB family.

It catalyses the reaction a lipid X + a UDP-2-N,3-O-bis[(3R)-3-hydroxyacyl]-alpha-D-glucosamine = a lipid A disaccharide + UDP + H(+). It participates in bacterial outer membrane biogenesis; LPS lipid A biosynthesis. Condensation of UDP-2,3-diacylglucosamine and 2,3-diacylglucosamine-1-phosphate to form lipid A disaccharide, a precursor of lipid A, a phosphorylated glycolipid that anchors the lipopolysaccharide to the outer membrane of the cell. The sequence is that of Lipid-A-disaccharide synthase from Chromobacterium violaceum (strain ATCC 12472 / DSM 30191 / JCM 1249 / CCUG 213 / NBRC 12614 / NCIMB 9131 / NCTC 9757 / MK).